Consider the following 100-residue polypeptide: Noncompact myelin-associated protein (100 aa).

The Extracellular portion of the chain corresponds to Met-1–Gly-28. A helical membrane pass occupies residues Ala-29 to Leu-49. At Lys-50–Arg-100 the chain is on the cytoplasmic side. The disordered stretch occupies residues Thr-58–Arg-100. Over residues Pro-77 to Ala-87 the composition is skewed to polar residues.

Post-translationally, glycosylated. Expressed in the peripheral nervous system Schwann cells (at protein level).

Its subcellular location is the cell membrane. Functionally, plays a role in myelin formation. The sequence is that of Noncompact myelin-associated protein (Ncmap) from Rattus norvegicus (Rat).